Here is a 105-residue protein sequence, read N- to C-terminus: Small ribosomal subunit protein uS10 (105 aa).

The protein belongs to the universal ribosomal protein uS10 family. In terms of assembly, part of the 30S ribosomal subunit.

Involved in the binding of tRNA to the ribosomes. The polypeptide is Small ribosomal subunit protein uS10 (Synechococcus sp. (strain JA-2-3B'a(2-13)) (Cyanobacteria bacterium Yellowstone B-Prime)).